A 275-amino-acid polypeptide reads, in one-letter code: Nitrogenase iron protein 3 (275 aa).

An ATP-binding site is contributed by 9–16; it reads GKGGIGKS. [4Fe-4S] cluster is bound at residue Cys97. Arg100 is subject to ADP-ribosylarginine; by dinitrogenase reductase ADP-ribosyltransferase. Cys132 is a binding site for [4Fe-4S] cluster.

The protein belongs to the NifH/BchL/ChlL family. Homodimer. Requires [4Fe-4S] cluster as cofactor. The reversible ADP-ribosylation of Arg-100 inactivates the nitrogenase reductase and regulates nitrogenase activity.

It catalyses the reaction N2 + 8 reduced [2Fe-2S]-[ferredoxin] + 16 ATP + 16 H2O = H2 + 8 oxidized [2Fe-2S]-[ferredoxin] + 2 NH4(+) + 16 ADP + 16 phosphate + 6 H(+). Its function is as follows. The key enzymatic reactions in nitrogen fixation are catalyzed by the nitrogenase complex, which has 2 components: the iron protein and the molybdenum-iron protein. The chain is Nitrogenase iron protein 3 (nifH3) from Clostridium pasteurianum.